Here is a 163-residue protein sequence, read N- to C-terminus: Crossover junction endodeoxyribonuclease RuvC (163 aa).

Catalysis depends on residues Asp-7, Glu-68, and His-142. 3 residues coordinate Mg(2+): Asp-7, Glu-68, and His-142.

Belongs to the RuvC family. As to quaternary structure, homodimer which binds Holliday junction (HJ) DNA. The HJ becomes 2-fold symmetrical on binding to RuvC with unstacked arms; it has a different conformation from HJ DNA in complex with RuvA. In the full resolvosome a probable DNA-RuvA(4)-RuvB(12)-RuvC(2) complex forms which resolves the HJ. It depends on Mg(2+) as a cofactor.

The protein resides in the cytoplasm. It carries out the reaction Endonucleolytic cleavage at a junction such as a reciprocal single-stranded crossover between two homologous DNA duplexes (Holliday junction).. In terms of biological role, the RuvA-RuvB-RuvC complex processes Holliday junction (HJ) DNA during genetic recombination and DNA repair. Endonuclease that resolves HJ intermediates. Cleaves cruciform DNA by making single-stranded nicks across the HJ at symmetrical positions within the homologous arms, yielding a 5'-phosphate and a 3'-hydroxyl group; requires a central core of homology in the junction. The consensus cleavage sequence is 5'-(A/T)TT(C/G)-3'. Cleavage occurs on the 3'-side of the TT dinucleotide at the point of strand exchange. HJ branch migration catalyzed by RuvA-RuvB allows RuvC to scan DNA until it finds its consensus sequence, where it cleaves and resolves the cruciform DNA. In Anaplasma phagocytophilum (strain HZ), this protein is Crossover junction endodeoxyribonuclease RuvC.